A 520-amino-acid polypeptide reads, in one-letter code: Ribonuclease Y 2 (520 aa).

A helical membrane pass occupies residues 7 to 23 (VVLLLASIGVGYGLRAK). Residues 206-269 (NHRSFIAENA…AVAMETMEMI (64 aa)) enclose the KH domain. Residues 332–425 (ILEHSIETAK…VEAADAISGA (94 aa)) enclose the HD domain.

It belongs to the RNase Y family.

Its subcellular location is the cell membrane. Endoribonuclease that initiates mRNA decay. The sequence is that of Ribonuclease Y 2 from Pediococcus pentosaceus (strain ATCC 25745 / CCUG 21536 / LMG 10740 / 183-1w).